Reading from the N-terminus, the 1012-residue chain is Roundabout homolog 4 (1012 aa).

Positions 1–27 (MGSGGTGLLGTEWPLPLLLLFIMGGEA) are cleaved as a signal peptide. 2 Ig-like C2-type domains span residues 32 to 132 (PQIL…ARLS) and 138 to 225 (EDFQ…ARVS). 2 disulfides stabilise this stretch: cysteine 53-cysteine 115 and cysteine 159-cysteine 208. N-linked (GlcNAc...) asparagine glycosylation is found at asparagine 201 and asparagine 247. Fibronectin type-III domains lie at 249–346 (TLLN…LPEQ) and 348–443 (PSAP…LEQA). Asparagine 361, asparagine 390, and asparagine 397 each carry an N-linked (GlcNAc...) asparagine glycan. 2 disordered regions span residues 533-553 (TSGSRDLSSSSSLSSRLGLDP) and 586-616 (LIAEQPSSPPVRPSPKTPAARRFPSKLAGTS). A compositionally biased stretch (low complexity) spans 534 to 550 (SGSRDLSSSSSLSSRLG). Over residues 592–601 (SSPPVRPSPK) the composition is skewed to pro residues. 2 N-linked (GlcNAc...) asparagine glycosylation sites follow: asparagine 681 and asparagine 713. A disordered region spans residues 711-801 (HRNSSELASR…LEEEEDQDSV (91 aa)). Residues 745–759 (LQAPSSDPLPAAPLS) are compositionally biased toward low complexity. Positions 760–771 (VLNSSRPSSPQA) are enriched in polar residues. N-linked (GlcNAc...) asparagine glycans are attached at residues asparagine 762 and asparagine 783. A compositionally biased stretch (low complexity) spans 772 to 791 (SFLSCPSPSSSNLSSSSLSS). Phosphoserine occurs at positions 814 and 947. The disordered stretch occupies residues 980–1012 (RLGRGLPPWPPDSRASSQRSWLTGAVPKAGDSS).

It belongs to the immunoglobulin superfamily. ROBO family. Interacts with SLIT2 and ENAH. In terms of tissue distribution, expressed specifically in embryo and adult vascular endothelium.

In terms of biological role, receptor for Slit proteins, at least for SLIT2, and seems to be involved in angiogenesis and vascular patterning. May mediate the inhibition of primary endothelial cell migration by Slit proteins. Involved in the maintenance of endothelial barrier organization and function. In Mus musculus (Mouse), this protein is Roundabout homolog 4 (Robo4).